A 245-amino-acid polypeptide reads, in one-letter code: tRNA1(Val) (adenine(37)-N6)-methyltransferase (245 aa).

Belongs to the methyltransferase superfamily. tRNA (adenine-N(6)-)-methyltransferase family.

Its subcellular location is the cytoplasm. It carries out the reaction adenosine(37) in tRNA1(Val) + S-adenosyl-L-methionine = N(6)-methyladenosine(37) in tRNA1(Val) + S-adenosyl-L-homocysteine + H(+). Functionally, specifically methylates the adenine in position 37 of tRNA(1)(Val) (anticodon cmo5UAC). The protein is tRNA1(Val) (adenine(37)-N6)-methyltransferase of Salmonella arizonae (strain ATCC BAA-731 / CDC346-86 / RSK2980).